The following is a 317-amino-acid chain: Ribonuclease 3-like protein 2 (317 aa).

Residues 1 to 26 are disordered; that stretch reads MAPPPAMKPASRKRGPPAPDPVELPP. Positions 16-26 are enriched in pro residues; sequence PPAPDPVELPP. One can recognise an RNase III domain in the interval 37-185; the sequence is AARVERLLRY…IAAAVYVDCK (149 aa). Mg(2+)-binding residues include glutamate 74, aspartate 171, and glutamate 174. The DRBM domain maps to 211-274; it reads QPVTMLHELC…ARDATRKLAG (64 aa).

The cofactor is Mg(2+). Mn(2+) is required as a cofactor.

Its function is as follows. Cleaves double-stranded RNA (dsRNA). This is Ribonuclease 3-like protein 2 from Oryza sativa subsp. japonica (Rice).